The sequence spans 187 residues: ATP synthase subunit delta (187 aa).

This sequence belongs to the ATPase delta chain family. F-type ATPases have 2 components, F(1) - the catalytic core - and F(0) - the membrane proton channel. F(1) has five subunits: alpha(3), beta(3), gamma(1), delta(1), epsilon(1). F(0) has three main subunits: a(1), b(2) and c(10-14). The alpha and beta chains form an alternating ring which encloses part of the gamma chain. F(1) is attached to F(0) by a central stalk formed by the gamma and epsilon chains, while a peripheral stalk is formed by the delta and b chains.

It is found in the cell inner membrane. Functionally, f(1)F(0) ATP synthase produces ATP from ADP in the presence of a proton or sodium gradient. F-type ATPases consist of two structural domains, F(1) containing the extramembraneous catalytic core and F(0) containing the membrane proton channel, linked together by a central stalk and a peripheral stalk. During catalysis, ATP synthesis in the catalytic domain of F(1) is coupled via a rotary mechanism of the central stalk subunits to proton translocation. Its function is as follows. This protein is part of the stalk that links CF(0) to CF(1). It either transmits conformational changes from CF(0) to CF(1) or is implicated in proton conduction. This Leptospira biflexa serovar Patoc (strain Patoc 1 / Ames) protein is ATP synthase subunit delta.